Reading from the N-terminus, the 392-residue chain is MVEADRPGKLFIGGLNLETDEKALEAEFGKYGRIVEVLLMKDRETNKSRGFAFVTFESPADAKAAARDMNGKSLDGKAIKVAQATKPAFESSRRGPPPPRSRGRPRFLRGTRGGGGGPRRSPSRGGPDDDGGYTADFDLRPSRAPMPMKRGPPPRRVGPPPKRAAPSGPARSSGGGMRGRALAVRGRDGYSGPPRREPLPPRRDPYLGPRDEGYSSRDGYSSRDYREPRGFAPSPGEYTHRDYGHSSVRDDCPLRGYSDRDGYGGRDRDYGDHLSRGSHREPFESYGELRGAAPGRGTPPSYGGGGRYEEYRGYSPDAYSGGRDSYSSSYGRSDRYSRGRHRVGRPDRGLSLSMERGCPPQRDSYSRSGCRVPRGGGRLGGRLERGGGRSRY.

The 79-residue stretch at 8–86 (GKLFIGGLNL…KAIKVAQATK (79 aa)) folds into the RRM domain. A compositionally biased stretch (basic and acidic residues) spans 67–78 (RDMNGKSLDGKA). Residues 67–392 (RDMNGKSLDG…LERGGGRSRY (326 aa)) are disordered. Residues 150 to 163 (RGPPPRRVGPPPKR) show a composition bias toward pro residues. Basic and acidic residues-rich tracts occupy residues 194 to 229 (PRREPLPPRRDPYLGPRDEGYSSRDGYSSRDYREPR) and 238 to 283 (YTHR…REPF). The segment covering 319–331 (YSGGRDSYSSSYG) has biased composition (low complexity). A compositionally biased stretch (basic and acidic residues) spans 381-392 (GRLERGGGRSRY).

In terms of tissue distribution, expressed predominantly in spermatocytes and less in round spermatids (at protein level). Expressed in germ cells.

Its subcellular location is the nucleus. In Homo sapiens (Human), this protein is RNA-binding motif protein, X-linked-like-2 (RBMXL2).